The chain runs to 303 residues: ATP synthase gamma chain (303 aa).

The protein belongs to the ATPase gamma chain family. In terms of assembly, F-type ATPases have 2 components, CF(1) - the catalytic core - and CF(0) - the membrane proton channel. CF(1) has five subunits: alpha(3), beta(3), gamma(1), delta(1), epsilon(1). CF(0) has three main subunits: a, b and c.

The protein localises to the cell inner membrane. Produces ATP from ADP in the presence of a proton gradient across the membrane. The gamma chain is believed to be important in regulating ATPase activity and the flow of protons through the CF(0) complex. This chain is ATP synthase gamma chain, found in Elusimicrobium minutum (strain Pei191).